Consider the following 431-residue polypeptide: Beta-lactamase hydrolase-like protein (431 aa).

Zn(2+) contacts are provided by histidine 212, histidine 214, and histidine 286. Aspartate 309 lines the substrate pocket.

The protein belongs to the metallo-beta-lactamase superfamily. Zn(2+) serves as cofactor.

Could play a role in cell adherence or biofilm development. This is Beta-lactamase hydrolase-like protein from Xylella fastidiosa (strain 9a5c).